The sequence spans 191 residues: Ion-translocating oxidoreductase complex subunit B (191 aa).

A hydrophobic region spans residues Met1 to Ser26. Positions Glu32–Val91 constitute a 4Fe-4S domain. [4Fe-4S] cluster-binding residues include Cys49, Cys52, Cys57, Cys74, Cys116, Cys119, Cys122, Cys126, Cys146, Cys149, Cys152, and Cys156. 2 4Fe-4S ferredoxin-type domains span residues Lys107–Arg136 and Ala137–Val166.

It belongs to the 4Fe4S bacterial-type ferredoxin family. RnfB subfamily. As to quaternary structure, the complex is composed of six subunits: RnfA, RnfB, RnfC, RnfD, RnfE and RnfG. [4Fe-4S] cluster serves as cofactor.

The protein localises to the cell inner membrane. In terms of biological role, part of a membrane-bound complex that couples electron transfer with translocation of ions across the membrane. This is Ion-translocating oxidoreductase complex subunit B from Erwinia tasmaniensis (strain DSM 17950 / CFBP 7177 / CIP 109463 / NCPPB 4357 / Et1/99).